The sequence spans 83 residues: uncharacterized protein (83 aa).

The first 20 residues, 1-20 (MRRALTLAVLATCAVLPALA), serve as a signal peptide directing secretion.

To P.denitrificans and M.extorquens MoxJ.

This is an uncharacterized protein from Paracoccus denitrificans.